The chain runs to 42 residues: Potassium channel toxin gamma-KTx 1.4 (42 aa).

Cystine bridges form between Cys5–Cys23, Cys11–Cys34, Cys20–Cys39, and Cys24–Cys41.

This sequence belongs to the ergtoxin family. Gamma-KTx 1 subfamily. In terms of tissue distribution, expressed by the venom gland.

Its subcellular location is the secreted. In terms of biological role, blocks Kv11/ERG potassium channels. This is Potassium channel toxin gamma-KTx 1.4 from Centruroides sculpturatus (Arizona bark scorpion).